Consider the following 162-residue polypeptide: NADH-quinone oxidoreductase subunit I (162 aa).

4Fe-4S ferredoxin-type domains lie at 53 to 83 (LRRY…IEAE) and 93 to 122 (TRYD…EGPN). [4Fe-4S] cluster contacts are provided by C63, C66, C69, C73, C102, C105, C108, and C112.

The protein belongs to the complex I 23 kDa subunit family. In terms of assembly, NDH-1 is composed of 14 different subunits. Subunits NuoA, H, J, K, L, M, N constitute the membrane sector of the complex. It depends on [4Fe-4S] cluster as a cofactor.

It localises to the cell inner membrane. It catalyses the reaction a quinone + NADH + 5 H(+)(in) = a quinol + NAD(+) + 4 H(+)(out). NDH-1 shuttles electrons from NADH, via FMN and iron-sulfur (Fe-S) centers, to quinones in the respiratory chain. The immediate electron acceptor for the enzyme in this species is believed to be ubiquinone. Couples the redox reaction to proton translocation (for every two electrons transferred, four hydrogen ions are translocated across the cytoplasmic membrane), and thus conserves the redox energy in a proton gradient. This is NADH-quinone oxidoreductase subunit I from Rhodospirillum rubrum (strain ATCC 11170 / ATH 1.1.1 / DSM 467 / LMG 4362 / NCIMB 8255 / S1).